Reading from the N-terminus, the 1256-residue chain is Bifunctional autolysin (1256 aa).

The N-terminal stretch at 1–29 is a signal peptide; that stretch reads MAKKFNYKLPSMVALTLVGSAVTAHQVQA. Polar residues predominate over residues 103–138; sequence GDTRANQSATTNNTQPVAKSTSTTAPKTNTNVTNAG. Disordered stretches follow at residues 103–151, 173–219, and 419–440; these read GDTR…NSEN, AAAP…KYKP, and TQST…PSTG. 2 stretches are compositionally biased toward low complexity: residues 173-196 and 421-439; these read AAAP…KVTT and STTT…KPST. Positions 199–775 are N-acetylmuramoyl-L-alanine amidase; sequence ASAQPRSVAA…AVAQPKTAVK (577 aa). GW domains lie at 443-517, 519-593, 612-686, 688-762, 784-859, 861-936, and 943-1017; these read TVAA…YNTA, SPVN…DTAK, TVSS…YNNA, SPVN…VPAA, TTQT…VQNL, KEVK…APTA, and AAKD…KELI. The endo-beta-N-acetylglucosaminidase stretch occupies residues 776 to 1256; sequence AYTVTKPQTT…GKYFDIPQYK (481 aa).

It in the N-terminal section; belongs to the N-acetylmuramoyl-L-alanine amidase 2 family. The protein in the C-terminal section; belongs to the glycosyl hydrolase 73 family. As to quaternary structure, oligomer; forms a ring structure at the cell surface which is important for efficient partitioning of daughter cells after cell division. In terms of processing, undergoes proteolytic processing to generate the two extracellular lytic enzymes, probably at the septal region on the cell surface.

The protein localises to the secreted. It catalyses the reaction Hydrolyzes the link between N-acetylmuramoyl residues and L-amino acid residues in certain cell-wall glycopeptides.. The enzyme catalyses an N(4)-(oligosaccharide-(1-&gt;3)-[oligosaccharide-(1-&gt;6)]-beta-D-Man-(1-&gt;4)-beta-D-GlcNAc-(1-&gt;4)-alpha-D-GlcNAc)-L-asparaginyl-[protein] + H2O = an oligosaccharide-(1-&gt;3)-[oligosaccharide-(1-&gt;6)]-beta-D-Man-(1-&gt;4)-D-GlcNAc + N(4)-(N-acetyl-beta-D-glucosaminyl)-L-asparaginyl-[protein]. Endohydrolysis of the di-N-acetylchitobiosyl unit in high-mannose glycopeptides and glycoproteins containing the -[(Man)5(GlcNAc)2]-Asn structure. One N-acetyl-D-glucosamine residue remains attached to the protein; the rest of the oligosaccharide is released intact. Cleaves the peptidoglycan connecting the daughter cells at the end of the cell division cycle, resulting in the separation of the two newly divided cells. Acts as an autolysin in penicillin-induced lysis. The sequence is that of Bifunctional autolysin (atl) from Staphylococcus aureus (strain MW2).